The chain runs to 79 residues: uncharacterized protein (79 aa).

This is an uncharacterized protein from Caenorhabditis elegans.